Here is a 239-residue protein sequence, read N- to C-terminus: Uridylate kinase (239 aa).

10-13 (KLSG) contributes to the ATP binding site. Position 52 (G52) interacts with UMP. ATP-binding residues include G53 and R57. Residues D72 and 133–140 (TGNPFFTT) each bind UMP. Residues T160, Y166, and D169 each coordinate ATP.

It belongs to the UMP kinase family. Homohexamer.

It is found in the cytoplasm. It catalyses the reaction UMP + ATP = UDP + ADP. It participates in pyrimidine metabolism; CTP biosynthesis via de novo pathway; UDP from UMP (UMPK route): step 1/1. Inhibited by UTP. Functionally, catalyzes the reversible phosphorylation of UMP to UDP. This is Uridylate kinase from Porphyromonas gingivalis (strain ATCC BAA-308 / W83).